We begin with the raw amino-acid sequence, 593 residues long: A-type ATP synthase subunit A (593 aa).

236-243 (GPFGSGKT) contacts ATP.

It belongs to the ATPase alpha/beta chains family. As to quaternary structure, has multiple subunits with at least A(3), B(3), C, D, E, F, H, I and proteolipid K(x).

It localises to the cell membrane. It catalyses the reaction ATP + H2O + 4 H(+)(in) = ADP + phosphate + 5 H(+)(out). Its function is as follows. Component of the A-type ATP synthase that produces ATP from ADP in the presence of a proton gradient across the membrane. The A chain is the catalytic subunit. The sequence is that of A-type ATP synthase subunit A from Pyrobaculum arsenaticum (strain DSM 13514 / JCM 11321 / PZ6).